Reading from the N-terminus, the 944-residue chain is Trehalose monomycolate exporter MmpL3 (944 aa).

The Cytoplasmic portion of the chain corresponds to 1–13 (MFAWWGRTVYRYR). Residues 14–34 (FIVIGVMVALCLGGGVFGLSL) form a helical membrane-spanning segment. The Periplasmic segment spans residues 35-185 (GKHVTQSGFY…TIATDQRRME (151 aa)). 40 to 44 (QSGFY) contacts a 1,2-diacylglycero-3-phosphoethanolamine. Residues 186 to 206 (VLALPLVAVVLFFVFGGVIAA) form a helical membrane-spanning segment. The Cytoplasmic segment spans residues 207–209 (GLP). A helical transmembrane segment spans residues 210-230 (VMVGGLCIAGALGIMRFLAIF). At 231 to 235 (GPVHY) the chain is on the periplasmic side. Residues 236–256 (FAQPVVSLIGLGIAIDYGLFI) form a helical membrane-spanning segment. The Cytoplasmic segment spans residues 257 to 286 (VSRFREEIAEGYDTETAVRRTVITAGRTVT). A helical transmembrane segment spans residues 287-307 (FSAVLIVASAIGLLLFPQGFL). Topologically, residues 308–314 (KSLTYAT) are periplasmic. A helical membrane pass occupies residues 315–335 (IASVMLSAILSITVLPACLGI). Topologically, residues 336–396 (LGKHVDALGV…KLVNRVMKRP (61 aa)) are cytoplasmic. The chain crosses the membrane as a helical span at residues 397-417 (VLFAAPIVIIMILLIIPVGKL). Residues 418–562 (SLGGISEKYL…HGLFAKMPLM (145 aa)) lie on the Periplasmic side of the membrane. The chain crosses the membrane as a helical span at residues 563–583 (VVILLTTTIVLMFLAFGSVVL). The Cytoplasmic portion of the chain corresponds to 584–586 (PIK). Residues 587–607 (ATLMSALTLGSTMGILTWIFV) traverse the membrane as a helical segment. At 608-616 (DGHFSKWLN) the chain is on the periplasmic side. Residues 617–637 (FTPTPLTAPVIGLIIALVFGL) traverse the membrane as a helical segment. At 638 to 672 (STDYEVFLVSRMVEARERGMSTQEAIRIGTAATGR) the chain is on the cytoplasmic side. A helical transmembrane segment spans residues 673 to 693 (IITAAALIVAVVAGAFVFSDL). Residues 694-698 (VMMKY) lie on the Periplasmic side of the membrane. A helical membrane pass occupies residues 699–719 (LAFGLMAALLLDATVVRMFLV). Residues 720–944 (PSVMKLLGDD…QDLLRREGRL (225 aa)) are Cytoplasmic-facing. Residues 778–944 (AAGDPRPPHD…QDLLRREGRL (167 aa)) form a disordered region. Positions 791–828 (PLAESPRPARSSPASSPELTPALEATAAPAAPSGASTT) are enriched in low complexity. Residues 829–839 (RMQIGSSTEPP) are compositionally biased toward polar residues. Pro residues predominate over residues 855-866 (STPPPTPTPPSA).

It belongs to the resistance-nodulation-cell division (RND) (TC 2.A.6) family. MmpL subfamily. As to quaternary structure, monomer. Interacts with TtfA (via N-terminus); active trehalose monomycolate (TMM) biosynthesis is not required for the complex formation.

Its subcellular location is the cell inner membrane. The protein resides in the cell septum. It localises to the cell tip. Its activity is regulated as follows. Inhibited by the antitubercular drug SQ109. Also inhibited by several other compounds such as the pyrrole derivative BM212, the adamantyl urea derivative AU1235, the benzimidazole C215, indoleamides, tetrahydropyrazolo[1,5-a]pyrimidine-3-carboxamide (THPP) and N-benzyl-6',7'-dihydrospiro[piperidine-4,4'-thieno[3,2-c]pyran] (Spiro) analogs. Inhibitory effects of these compounds, including SQ109, are most likely due to their ability to dissipate the transmembrane electrochemical proton gradient. Transports trehalose monomycolate (TMM) to the cell wall. Flips TMM across the inner membrane. Membrane potential is not required for this function. Transports probably phosphatidylethanolamine (PE) as well. Binds specifically both TMM and PE, but not trehalose dimycolate (TDM). Also binds diacylglycerol (DAG) and other phospholipids, including phosphatidylglycerol (PG), phosphatidylinositol (PI), and cardiolipin (CDL). Contributes to membrane potential, cell wall composition, antibiotic susceptibility and fitness. Could also be part of a heme-iron acquisition system. Functionally, is the target of the antitubercular drug SQ109. The chain is Trehalose monomycolate exporter MmpL3 (mmpL3) from Mycobacterium tuberculosis (strain ATCC 25618 / H37Rv).